Reading from the N-terminus, the 263-residue chain is Syntaxin-73 (263 aa).

Over 1–240 (MGVIDLITRV…TVTKLRSSRN (240 aa)) the chain is Cytoplasmic. S12 carries the post-translational modification Phosphoserine. Residues 169-231 (YEMKRIKQAR…KSTNVRLKDT (63 aa)) enclose the t-SNARE coiled-coil homology domain. Residues 241-261 (FCIDIILLCILLGIAAFIYNS) form a helical; Anchor for type IV membrane protein membrane-spanning segment. Over 262–263 (VK) the chain is Vesicular.

It belongs to the syntaxin family. As to quaternary structure, part of the t-SNARE complex. In terms of tissue distribution, expressed in root, leaf, stem, flower and silique.

It localises to the membrane. In terms of biological role, vesicle trafficking protein that functions in the secretory pathway. The polypeptide is Syntaxin-73 (SYP73) (Arabidopsis thaliana (Mouse-ear cress)).